Reading from the N-terminus, the 490-residue chain is Angiopoietin-related protein 1 (490 aa).

The first 22 residues, 1-22, serve as a signal peptide directing secretion; sequence MKAFVWTLSVLLFLLGSGHCKG. The stretch at 79–167 forms a coiled coil; the sequence is ITRMDLENLK…LNVTTEMLKM (89 aa). Residues asparagine 159 and asparagine 187 are each glycosylated (N-linked (GlcNAc...) asparagine). The region spanning 270–490 is the Fibrinogen C-terminal domain; the sequence is FINEGPFKDC…AVQMMIKPID (221 aa). Disulfide bonds link cysteine 279–cysteine 308 and cysteine 431–cysteine 444.

It is found in the secreted. The sequence is that of Angiopoietin-related protein 1 (Angptl1) from Mus musculus (Mouse).